The sequence spans 1000 residues: Exportin-T (1000 aa).

Belongs to the exportin family.

The protein localises to the nucleus. It localises to the cytoplasm. Its function is as follows. tRNA nucleus export receptor which facilitates tRNA translocation across the nuclear pore complex. Involved in pre-tRNA splicing, probably by affecting the interaction of pre-tRNA with splicing endonuclease. The polypeptide is Exportin-T (LOS1) (Debaryomyces hansenii (strain ATCC 36239 / CBS 767 / BCRC 21394 / JCM 1990 / NBRC 0083 / IGC 2968) (Yeast)).